Here is a 2310-residue protein sequence, read N- to C-terminus: Peroxide stress-activated histidine kinase mak2 (2310 aa).

Positions 12–292 constitute a Protein kinase domain; that stretch reads DYAISQLGEF…SATDLCYTIV (281 aa). A GAF domain is found at 1450-1592; it reads RLGPLLTTVI…LLSQQIAISV (143 aa). Positions 1760–1986 constitute a Histidine kinase domain; it reads NMSHELRTPF…TFWFHVQLRN (227 aa). His1763 is subject to Phosphohistidine; by autocatalysis. In terms of domain architecture, Response regulatory spans 2180–2303; sequence YALIAEDNLI…QLVNAVREFV (124 aa). Asp2232 carries the post-translational modification 4-aspartylphosphate.

The protein localises to the cytoplasm. The catalysed reaction is ATP + protein L-histidine = ADP + protein N-phospho-L-histidine.. Involved in the control of the SAPK-dependent transcriptional response to peroxide stress. Regulates sty1 activity. The sequence is that of Peroxide stress-activated histidine kinase mak2 (mak2) from Schizosaccharomyces pombe (strain 972 / ATCC 24843) (Fission yeast).